Reading from the N-terminus, the 686-residue chain is DNA ligase (686 aa).

Residues 31-35 (DSEYD), 80-81 (SL), and glutamate 109 each bind NAD(+). Lysine 111 functions as the N6-AMP-lysine intermediate in the catalytic mechanism. Residues arginine 132, glutamate 166, lysine 280, and lysine 304 each coordinate NAD(+). Cysteine 430, cysteine 433, cysteine 448, and cysteine 453 together coordinate Zn(2+). A BRCT domain is found at 611-686 (NVEGILSGKT…IWSEQDLLDL (76 aa)).

It belongs to the NAD-dependent DNA ligase family. LigA subfamily. Mg(2+) serves as cofactor. Requires Mn(2+) as cofactor.

It catalyses the reaction NAD(+) + (deoxyribonucleotide)n-3'-hydroxyl + 5'-phospho-(deoxyribonucleotide)m = (deoxyribonucleotide)n+m + AMP + beta-nicotinamide D-nucleotide.. Its function is as follows. DNA ligase that catalyzes the formation of phosphodiester linkages between 5'-phosphoryl and 3'-hydroxyl groups in double-stranded DNA using NAD as a coenzyme and as the energy source for the reaction. It is essential for DNA replication and repair of damaged DNA. The polypeptide is DNA ligase (Lactococcus lactis subsp. cremoris (strain SK11)).